A 477-amino-acid chain; its full sequence is MRDYREFYIDGQWVRPKGAREAEVINPATEKIVGLISLGTEEHVDLAVRAARRAFDGWSRTSKDQRLELLEQVCRAFESKLDEIAKAITEEMGAPLVQLALPLQAPAGLGHFLTAASILRDYDFEESLGTTRVVREPAGVCGLITPWNWPLNQIAAKVAPALAAGCTMVLKPSEIAPFSAYLLARIFDEVGVPPGVFNLVNGDGPGVGAPLAAHPEVDLVSFTGSTRAGTLVSTAAAPTVKRVALELGGKSANIILDDADLETAVKHGVRTMMLNTGQSCNAPSRMLVPLSKLDEVEHLAEHFCKEIVVGDPMHSDTNIGPLASGMQYEKVQDCIRQGVAEGAKLICGGLGRPDGLESGYFAQPTIFSAVNKQMYIAREEIFGPVLCIMPYGDENEAIQIANDSCYGLSGYVSSGSLERARNVAKQLRTGAVHLNGAALDFTAPFGGYKQSGNGREWGKYGFEEFLEIKAVMGYEGS.

202–208 (GDGPGVG) is a binding site for NAD(+). Catalysis depends on residues E246 and C280.

It belongs to the aldehyde dehydrogenase family.

It carries out the reaction 4-oxo-4-(pyridin-3-yl)butanal + NADP(+) + H2O = 4-oxo-4-(pyridin-3-yl)butanoate + NADPH + 2 H(+). It participates in alkaloid degradation; nicotine degradation. Catalyzes the dehydrogenation of 3-succinoylsemialdehyde-pyridine to 3-succinoyl-pyridine in the nicotine degradation pathway. This chain is 3-succinoylsemialdehyde-pyridine dehydrogenase (ald), found in Pseudomonas sp.